We begin with the raw amino-acid sequence, 60 residues long: Small ribosomal subunit protein bS21 (60 aa).

Residues 41–60 (PEEKRKRKAIARRRQRSRRR) are disordered. Over residues 45–60 (RKRKAIARRRQRSRRR) the composition is skewed to basic residues.

Belongs to the bacterial ribosomal protein bS21 family.

This is Small ribosomal subunit protein bS21 from Gloeothece citriformis (strain PCC 7424) (Cyanothece sp. (strain PCC 7424)).